Here is a 192-residue protein sequence, read N- to C-terminus: tRNA (cytidine(56)-2'-O)-methyltransferase (192 aa).

S-adenosyl-L-methionine is bound by residues Leu-84 and 112-116 (GGEKV).

The protein belongs to the aTrm56 family. As to quaternary structure, homodimer.

The protein resides in the cytoplasm. It carries out the reaction cytidine(56) in tRNA + S-adenosyl-L-methionine = 2'-O-methylcytidine(56) in tRNA + S-adenosyl-L-homocysteine + H(+). In terms of biological role, specifically catalyzes the AdoMet-dependent 2'-O-ribose methylation of cytidine at position 56 in tRNAs. The chain is tRNA (cytidine(56)-2'-O)-methyltransferase from Halobacterium salinarum (strain ATCC 700922 / JCM 11081 / NRC-1) (Halobacterium halobium).